Reading from the N-terminus, the 738-residue chain is MDMMGLAGTSKHITFLLLCQLGASGPGDGCCVEKTSFPEGASGSPLGPRNLSCYRVSKTDYECSWQYDGPEDNVSHVLWCCFVPPNHTHTGQERCRYFSSGPDRTVQFWEQDGIPVLSKVNFWVESRLGNRTMKSQKISQYLYNWTKTTPPLGHIKVSQSHRQLRMDWNVSEEAGAEVQFRRRMPTTNWTLGDCGPQVNSGSGVLGDIRGSMSESCLCPSENMAQEIQIRRRRRLSSGAPGGPWSDWSMPVCVPPEVLPQAKIKFLVEPLNQGGRRRLTMQGQSPQLAVPEGCRGRPGAQVKKHLVLVRMLSCRCQAQTSKTVPLGKKLNLSGATYDLNVLAKTRFGRSTIQKWHLPAQELTETRALNVSVGGNMTSMQWAAQAPGTTYCLEWQPWFQHRNHTHCTLIVPEEEDPAKMVTHSWSSKPTLEQEECYRITVFASKNPKNPMLWATVLSSYYFGGNASRAGTPRHVSVRNQTGDSVSVEWTASQLSTCPGVLTQYVVRCEAEDGAWESEWLVPPTKTQVTLDGLRSRVMYKVQVRADTARLPGAWSHPQRFSFEVQISRLSIIFASLGSFASVLLVGSLGYIGLNRAAWHLCPPLPTPCGSTAVEFPGSQGKQAWQWCNPEDFPEVLYPRDALVVEMPGDRGDGTESPQAAPECALDTRRPLETQRQRQVQALSEARRLGLAREDCPRGDLAHVTLPLLLGGVTQGASVLDDLWRTHKTAEPGPPTLGQEA.

The first 19 residues, 1–19 (MDMMGLAGTSKHITFLLLC), serve as a signal peptide directing secretion. At 20 to 565 (QLGASGPGDG…QRFSFEVQIS (546 aa)) the chain is on the extracellular side. 5 Fibronectin type-III domains span residues 47-152 (GPRN…TPPL), 152-258 (LGHI…PEVL), 259-359 (PQAK…LPAQ), 360-465 (ELTE…GNAS), and 469-565 (TPRH…VQIS). N-linked (GlcNAc...) asparagine glycosylation occurs at Asn-50. A disulfide bridge links Cys-53 with Cys-63. N-linked (GlcNAc...) asparagine glycosylation is found at Asn-73, Asn-86, Asn-130, Asn-144, Asn-169, and Asn-188. The WSXWS motif motif lies at 244-248 (WSDWS). Residues Asn-330, Asn-368, Asn-374, Asn-401, Asn-463, and Asn-477 are each glycosylated (N-linked (GlcNAc...) asparagine). Residues 566–591 (RLSIIFASLGSFASVLLVGSLGYIGL) traverse the membrane as a helical segment. At 592-738 (NRAAWHLCPP…PGPPTLGQEA (147 aa)) the chain is on the cytoplasmic side. The Box 1 motif motif lies at 598–606 (LCPPLPTPC).

Belongs to the type I cytokine receptor family. Type 2 subfamily. As to quaternary structure, dimer or oligomer; disulfide-linked. Interacts with IL12RB2 to form the high affinity IL12 receptor. Heterodimer with IL23R; in presence of IL23. The heterodimer forms the IL23 receptor.

The protein resides in the membrane. Functions as an interleukin receptor which binds interleukin-12 with low affinity and is involved in IL12 transduction. Associated with IL12RB2 it forms a functional, high affinity receptor for IL12. Also associates with IL23R to form the interleukin-23 receptor which functions in IL23 signal transduction probably through activation of the Jak-Stat signaling cascade. The polypeptide is Interleukin-12 receptor subunit beta-1 (Il12rb1) (Mus musculus (Mouse)).